The primary structure comprises 214 residues: MGQKTHPLGFRLGITQEHKSTWYANFNQYANILKEDDKIRTYIHTISKANSIANVRINRNGLNDQIQLNIETGKPGILVGDLGAGLETLLNNVKKFLPANRQLTINVLEVEKVDLDASLLADLVAEQLEKRIAFRRAIREALQRAQKQNVNGIKIQVSGRLNGAEIARSEWIREGRVPLQTLRADIDYATQEANTIYGVLGIKVWLFKSEILSK.

A KH type-2 domain is found at 39 to 111; it reads IRTYIHTISK…QLTINVLEVE (73 aa).

This sequence belongs to the universal ribosomal protein uS3 family. In terms of assembly, part of the 30S ribosomal subunit.

The protein localises to the plastid. It is found in the chloroplast. The polypeptide is Small ribosomal subunit protein uS3c (rps3) (Phaeodactylum tricornutum (strain CCAP 1055/1)).